The sequence spans 490 residues: Cytochrome P450 2C20 (490 aa).

Residue Cys-435 coordinates heme.

It belongs to the cytochrome P450 family. Heme is required as a cofactor.

It is found in the endoplasmic reticulum membrane. The protein resides in the microsome membrane. It carries out the reaction an organic molecule + reduced [NADPH--hemoprotein reductase] + O2 = an alcohol + oxidized [NADPH--hemoprotein reductase] + H2O + H(+). In terms of biological role, cytochromes P450 are a group of heme-thiolate monooxygenases. In liver microsomes, this enzyme is involved in an NADPH-dependent electron transport pathway. It oxidizes a variety of structurally unrelated compounds, including steroids, fatty acids, and xenobiotics. This chain is Cytochrome P450 2C20 (CYP2C20), found in Macaca fascicularis (Crab-eating macaque).